Consider the following 616-residue polypeptide: Chaperone protein HscA (616 aa).

The protein belongs to the heat shock protein 70 family.

Functionally, chaperone involved in the maturation of iron-sulfur cluster-containing proteins. Has a low intrinsic ATPase activity which is markedly stimulated by HscB. Involved in the maturation of IscU. In Photorhabdus laumondii subsp. laumondii (strain DSM 15139 / CIP 105565 / TT01) (Photorhabdus luminescens subsp. laumondii), this protein is Chaperone protein HscA.